Consider the following 60-residue polypeptide: Cytotoxin 8 (60 aa).

4 disulfide bridges follow: Cys-3–Cys-21, Cys-14–Cys-38, Cys-42–Cys-53, and Cys-54–Cys-59.

Belongs to the three-finger toxin family. Short-chain subfamily. Type IA cytotoxin sub-subfamily. Monomer in solution; Homodimer and oligomer in the presence of negatively charged lipids forming a pore with a size ranging between 20 and 30 Angstroms. In terms of tissue distribution, expressed by the venom gland.

The protein localises to the secreted. It is found in the target cell membrane. Functionally, shows cytolytic activity on many different cells by forming pore in lipid membranes. In vivo, increases heart rate or kills the animal by cardiac arrest. In addition, it binds to heparin with high affinity, interacts with Kv channel-interacting protein 1 (KCNIP1) in a calcium-independent manner, and binds to integrin alpha-V/beta-3 (ITGAV/ITGB3) with moderate affinity. In Naja annulifera (Banded Egyptian cobra), this protein is Cytotoxin 8.